The primary structure comprises 262 residues: Acidic leucine-rich nuclear phosphoprotein 32 family member B (262 aa).

4 LRR repeats span residues 16-40 (PGEV…LSSD), 43-64 (NLEF…PKLN), 65-87 (KLRK…AERT), and 89-110 (NLTH…EPLK). Residues 123 to 161 (CEVTMLINYRESVFTLLPQLTYLDGFDADEQEAPDSDPE) form the LRRCT domain. A compositionally biased stretch (acidic residues) spans 150 to 233 (ADEQEAPDSD…EDEEDDEADD (84 aa)). Residues 150-262 (ADEQEAPDSD…PEDEEDDEDD (113 aa)) are disordered. The short motif at 240–243 (KRKR) is the Nuclear localization signal element. The span at 247 to 262 (DEGEEDPEDEEDDEDD) shows a compositional bias: acidic residues.

This sequence belongs to the ANP32 family. Interacts with histones H3 and H4. Interacts with KLF5; this interaction induces promoter region-specific histone incorporation and inhibition of histone acetylation by ANP32B. Directly cleaved by caspase-3/CASP3.

It is found in the nucleus. Functionally, multifunctional protein that is involved in the regulation of many processes including cell proliferation, apoptosis, cell cycle progression or transcription. Regulates the proliferation of neuronal stem cells, differentiation of leukemic cells and progression from G1 to S phase of the cell cycle. As negative regulator of caspase-3-dependent apoptosis, may act as an antagonist of ANP32A in regulating tissue homeostasis. Exhibits histone chaperone properties, able to recruit histones to certain promoters, thus regulating the transcription of specific genes. Also plays an essential role in the nucleocytoplasmic transport of specific mRNAs via the uncommon nuclear mRNA export receptor XPO1/CRM1. This chain is Acidic leucine-rich nuclear phosphoprotein 32 family member B (ANP32B), found in Gallus gallus (Chicken).